Here is a 799-residue protein sequence, read N- to C-terminus: Target of rapamycin complex 1 subunit TCO89 (799 aa).

The disordered stretch occupies residues 18–41; the sequence is NASTVSHQSKPFRQFSTRSRAKSN. Residues T52 and T82 each carry the phosphothreonine modification. Phosphoserine occurs at positions 84, 104, 107, 115, and 144. Positions 97–126 are enriched in polar residues; sequence NQGKRSASFHSPVHNTLLSPKNSSHSNTGT. 2 disordered regions span residues 97 to 171 and 201 to 284; these read NQGK…DNIE and LQSP…ADID. Residues 147-156 show a composition bias toward basic and acidic residues; sequence DAQESKKSES. Over residues 157-170 the composition is skewed to acidic residues; the sequence is TTDEEVECFSEDNI. 2 positions are modified to phosphoserine: S203 and S215. A compositionally biased stretch (basic and acidic residues) spans 213-224; it reads DKSGTDGKENHR. Over residues 233 to 243 the composition is skewed to polar residues; sequence LSSNNYFGESS. The segment covering 244-253 has biased composition (basic and acidic residues); that stretch reads HSIEHQKDGE. A compositionally biased stretch (polar residues) spans 254-269; it reads TSPSSIETKLNATSVI. S290 carries the post-translational modification Phosphoserine. Residues 324–391 form a disordered region; the sequence is AHKSNQKPSH…PDDISSAGTK (68 aa). Residues 332-346 show a composition bias toward basic and acidic residues; sequence SHSDEQFDQEDHIDA. Low complexity predominate over residues 348–363; sequence RSNSSRKSDSSFMSLR. S397 carries the post-translational modification Phosphoserine. Disordered regions lie at residues 418 to 476 and 538 to 568; these read FENS…QSTF and NKNSAAPASPLSNEHITSSTNSGSDANRQSN. 2 stretches are compositionally biased toward polar residues: residues 420–429 and 461–476; these read NSSSIQNSLG and GRSQLGQNIPNSQSTF. The residue at position 575 (S575) is a Phosphoserine. The interval 663–685 is disordered; sequence IRKKSHNDAQSIAHSSSDTDHKD. The residue at position 707 (S707) is a Phosphoserine.

Belongs to the TORC subunit TCO89 family. The target of rapamycin complex 1 (TORC1) is composed of at least KOG1, LST8, TCO89 and either TOR1 (TORC1-A) or TOR2 (TORC1-B). Interacts with PIB2; following activation of PIB2 by glutamine or cysteine. TORC1 binds to and is inhibited by FKBP-rapamycin.

The protein resides in the cell membrane. The protein localises to the vacuole membrane. Component of TORC1, which regulates multiple cellular processes to control cell growth in response to environmental signals. Nutrient limitation and environmental stress signals cause inactivation of TORC1. Active TORC1 positively controls ribosome biogenesis via control of rRNA, ribosomal protein and tRNA gene expression, and rRNA processing. TORC1 positively controls protein biosynthesis by regulation of mRNA stability, translation initiation factor activity, and high-affinity amino acid permeases that serve to provide amino acids for use by the translation machinery. TORC1 also promotes growth by sequestering a number of nutrient and general stress-responsive transcription factors in the cytoplasm. TORC1 negatively controls macroautophagy, a process to recycle surplus cytoplasmic mass under nutrient starvation conditions. This chain is Target of rapamycin complex 1 subunit TCO89 (TCO89), found in Saccharomyces cerevisiae (strain ATCC 204508 / S288c) (Baker's yeast).